We begin with the raw amino-acid sequence, 200 residues long: Holliday junction resolvase RecU (200 aa).

Residues 1-25 (MTIRYPNGKRYNQASQPQKTPIKTH) are disordered. The segment covering 10–25 (RYNQASQPQKTPIKTH) has biased composition (polar residues). The Mg(2+) site is built by T85, D87, E100, and Q119.

The protein belongs to the RecU family. It depends on Mg(2+) as a cofactor.

Its subcellular location is the cytoplasm. It catalyses the reaction Endonucleolytic cleavage at a junction such as a reciprocal single-stranded crossover between two homologous DNA duplexes (Holliday junction).. In terms of biological role, endonuclease that resolves Holliday junction intermediates in genetic recombination. Cleaves mobile four-strand junctions by introducing symmetrical nicks in paired strands. Promotes annealing of linear ssDNA with homologous dsDNA. Required for DNA repair, homologous recombination and chromosome segregation. This is Holliday junction resolvase RecU from Bacillus cereus (strain G9842).